The primary structure comprises 119 residues: Holo-[acyl-carrier-protein] synthase (119 aa).

2 residues coordinate Mg(2+): Asp-8 and Glu-59.

Belongs to the P-Pant transferase superfamily. AcpS family. The cofactor is Mg(2+).

It localises to the cytoplasm. It carries out the reaction apo-[ACP] + CoA = holo-[ACP] + adenosine 3',5'-bisphosphate + H(+). Its function is as follows. Transfers the 4'-phosphopantetheine moiety from coenzyme A to a Ser of acyl-carrier-protein. This Lactococcus lactis subsp. lactis (strain IL1403) (Streptococcus lactis) protein is Holo-[acyl-carrier-protein] synthase.